We begin with the raw amino-acid sequence, 179 residues long: ATP-dependent protease subunit HslV (179 aa).

Residue Thr-7 is part of the active site. The Na(+) site is built by Gly-162, Cys-165, and Thr-168.

The protein belongs to the peptidase T1B family. HslV subfamily. In terms of assembly, a double ring-shaped homohexamer of HslV is capped on each side by a ring-shaped HslU homohexamer. The assembly of the HslU/HslV complex is dependent on binding of ATP.

The protein localises to the cytoplasm. It catalyses the reaction ATP-dependent cleavage of peptide bonds with broad specificity.. Its activity is regulated as follows. Allosterically activated by HslU binding. In terms of biological role, protease subunit of a proteasome-like degradation complex believed to be a general protein degrading machinery. This chain is ATP-dependent protease subunit HslV, found in Saccharophagus degradans (strain 2-40 / ATCC 43961 / DSM 17024).